The chain runs to 281 residues: Ornithine lipid ester-linked acyl 2-hydroxylase (281 aa).

Over residues 1–24 (MTESPLSAPAPTSNQSPAPEQTFG) the composition is skewed to polar residues. Positions 1–29 (MTESPLSAPAPTSNQSPAPEQTFGTAGIA) are disordered.

It belongs to the aspartyl/asparaginyl beta-hydroxylase family.

It catalyses the reaction an N(2)-[(3R)-3-(2-saturated-acyloxy)acyl]-L-ornithine lipid + 2-oxoglutarate + O2 = a 2-hydroxyornithine lipid + succinate + CO2. It participates in lipid metabolism. Functionally, involved in the biosynthesis of ornithine lipids (OLs), which are phosphorus-free membrane lipids. Catalyzes the hydroxylation at the 2 position of the secondary fatty acid of OL. Contributes to symbiotic performance and acid tolerance. The chain is Ornithine lipid ester-linked acyl 2-hydroxylase from Rhizobium tropici.